A 185-amino-acid chain; its full sequence is Signal peptidase I (185 aa).

The Cytoplasmic portion of the chain corresponds to 1–20 (MKSEKEKTSKKSAVLDWAKA). Residues 21–41 (IIIAVVLAVLIRNFLFAPYVV) form a helical membrane-spanning segment. Topologically, residues 42–185 (DGESMEPTLH…FPFNEIRKTK (144 aa)) are extracellular. Active-site residues include Ser45 and Lys85.

It belongs to the peptidase S26 family.

It is found in the cell membrane. It catalyses the reaction Cleavage of hydrophobic, N-terminal signal or leader sequences from secreted and periplasmic proteins.. In Bacillus amyloliquefaciens (Bacillus velezensis), this protein is Signal peptidase I (sipA).